Reading from the N-terminus, the 455-residue chain is Keratin, type I cuticular Ha5 (455 aa).

Positions Met1–Glu97 are head. In terms of domain architecture, IF rod spans Glu97 to Leu408. The tract at residues Lys98–Trp132 is coil 1A. The interval Cys133 to Asp143 is linker 1. Residues Tyr144–Cys244 are coil 1B. A linker 12 region spans residues Gln245–Val260. The interval Asp261–Glu404 is coil 2. Residues Asp405–Phe455 are tail.

This sequence belongs to the intermediate filament family.

This Mus musculus (Mouse) protein is Keratin, type I cuticular Ha5.